A 217-amino-acid polypeptide reads, in one-letter code: Uracil-DNA glycosylase (217 aa).

The active-site Proton acceptor is Asp62.

The protein belongs to the uracil-DNA glycosylase (UDG) superfamily. UNG family.

It localises to the cytoplasm. It catalyses the reaction Hydrolyzes single-stranded DNA or mismatched double-stranded DNA and polynucleotides, releasing free uracil.. Functionally, excises uracil residues from the DNA which can arise as a result of misincorporation of dUMP residues by DNA polymerase or due to deamination of cytosine. This chain is Uracil-DNA glycosylase, found in Streptococcus pyogenes serotype M6 (strain ATCC BAA-946 / MGAS10394).